Consider the following 333-residue polypeptide: Adenosine deaminase (333 aa).

Positions 12 and 14 each coordinate Zn(2+). Substrate is bound by residues histidine 14, aspartate 16, and glycine 170. Histidine 197 lines the Zn(2+) pocket. Glutamate 200 acts as the Proton donor in catalysis. Position 278 (aspartate 278) interacts with Zn(2+). Aspartate 279 provides a ligand contact to substrate.

This sequence belongs to the metallo-dependent hydrolases superfamily. Adenosine and AMP deaminases family. Adenosine deaminase subfamily. Zn(2+) serves as cofactor.

It catalyses the reaction adenosine + H2O + H(+) = inosine + NH4(+). The enzyme catalyses 2'-deoxyadenosine + H2O + H(+) = 2'-deoxyinosine + NH4(+). Catalyzes the hydrolytic deamination of adenosine and 2-deoxyadenosine. The chain is Adenosine deaminase from Proteus mirabilis (strain HI4320).